The chain runs to 72 residues: Translation initiation factor IF-1 (72 aa).

Residues 1–72 form the S1-like domain; that stretch reads MAKDDVIEVE…TRGRIVWRGK (72 aa).

The protein belongs to the IF-1 family. In terms of assembly, component of the 30S ribosomal translation pre-initiation complex which assembles on the 30S ribosome in the order IF-2 and IF-3, IF-1 and N-formylmethionyl-tRNA(fMet); mRNA recruitment can occur at any time during PIC assembly.

It is found in the cytoplasm. One of the essential components for the initiation of protein synthesis. Stabilizes the binding of IF-2 and IF-3 on the 30S subunit to which N-formylmethionyl-tRNA(fMet) subsequently binds. Helps modulate mRNA selection, yielding the 30S pre-initiation complex (PIC). Upon addition of the 50S ribosomal subunit IF-1, IF-2 and IF-3 are released leaving the mature 70S translation initiation complex. The sequence is that of Translation initiation factor IF-1 from Caldanaerobacter subterraneus subsp. tengcongensis (strain DSM 15242 / JCM 11007 / NBRC 100824 / MB4) (Thermoanaerobacter tengcongensis).